The primary structure comprises 367 residues: Serine O-succinyltransferase (367 aa).

The 311-residue stretch at 41–351 folds into the AB hydrolase-1 domain; the sequence is NAVLILTGLS…SPQGHDAFLV (311 aa). Positions 48-51 are important for substrate specificity; that stretch reads GLSP. Ser-146 (nucleophile) is an active-site residue. Substrate is bound at residue Arg-215. Residues Asp-313 and His-346 contribute to the active site. Residue Asp-347 participates in substrate binding.

Belongs to the AB hydrolase superfamily. MetX family. As to quaternary structure, homodimer.

It is found in the cytoplasm. The catalysed reaction is succinyl-CoA + L-serine = O-succinyl-L-serine + CoA. The enzyme catalyses L-homoserine + succinyl-CoA = O-succinyl-L-homoserine + CoA. The protein operates within amino-acid biosynthesis; L-cysteine biosynthesis; L-cysteine from L-serine: step 1/2. In terms of biological role, transfers a succinyl group from succinyl-CoA to L-serine, forming succinyl-L-serine. In vitro, also has homoserine succinyl transferase activity. This Frateuria aurantia (strain ATCC 33424 / DSM 6220 / KCTC 2777 / LMG 1558 / NBRC 3245 / NCIMB 13370) (Acetobacter aurantius) protein is Serine O-succinyltransferase.